The primary structure comprises 198 residues: Peroxiredoxin-2 (198 aa).

Ala2 bears the N-acetylalanine mark. A Thioredoxin domain is found at 6 to 164 (ARIGKPAPDF…ALRLVQAFQY (159 aa)). Catalysis depends on Cys51, which acts as the Cysteine sulfenic acid (-SOH) intermediate. Ser112 carries the post-translational modification Phosphoserine. Residue Thr182 is modified to Phosphothreonine. Position 196 is an N6-acetyllysine (Lys196).

The protein belongs to the peroxiredoxin family. AhpC/Prx1 subfamily. Homodimer; disulfide-linked, upon oxidation. 5 homodimers assemble to form a ring-like decamer. Interacts with TIPIN. Post-translationally, the enzyme can be inactivated by further oxidation of the cysteine sulfenic acid (C(P)-SOH) to sulphinic acid (C(P)-SO2H) instead of its condensation to a disulfide bond. It can be reactivated by forming a transient disulfide bond with sulfiredoxin SRXN1, which reduces the cysteine sulfinic acid in an ATP- and Mg-dependent manner. Acetylation increases resistance to transition to high molecular-mass complexes. Deacetylated by HDAC6 which decreases reducing activity.

The protein localises to the cytoplasm. The enzyme catalyses a hydroperoxide + [thioredoxin]-dithiol = an alcohol + [thioredoxin]-disulfide + H2O. Its function is as follows. Thiol-specific peroxidase that catalyzes the reduction of hydrogen peroxide and organic hydroperoxides to water and alcohols, respectively. Plays a role in cell protection against oxidative stress by detoxifying peroxides and as sensor of hydrogen peroxide-mediated signaling events. Might participate in the signaling cascades of growth factors and tumor necrosis factor-alpha by regulating the intracellular concentrations of H(2)O(2). This is Peroxiredoxin-2 (PRDX2) from Macaca fascicularis (Crab-eating macaque).